The sequence spans 279 residues: Oxygen-dependent coproporphyrinogen-III oxidase (279 aa).

Serine 102 contributes to the substrate binding site. 2 residues coordinate a divalent metal cation: histidine 106 and histidine 116. Histidine 116 (proton donor) is an active-site residue. Position 118 to 120 (asparagine 118 to arginine 120) interacts with substrate. A divalent metal cation-binding residues include histidine 149 and histidine 179. An important for dimerization region spans residues tyrosine 244–alanine 279.

The protein belongs to the aerobic coproporphyrinogen-III oxidase family. In terms of assembly, homodimer. Requires a divalent metal cation as cofactor.

The protein localises to the cytoplasm. It catalyses the reaction coproporphyrinogen III + O2 + 2 H(+) = protoporphyrinogen IX + 2 CO2 + 2 H2O. It participates in porphyrin-containing compound metabolism; protoporphyrin-IX biosynthesis; protoporphyrinogen-IX from coproporphyrinogen-III (O2 route): step 1/1. Involved in the heme biosynthesis. Catalyzes the aerobic oxidative decarboxylation of propionate groups of rings A and B of coproporphyrinogen-III to yield the vinyl groups in protoporphyrinogen-IX. In Rickettsia bellii (strain RML369-C), this protein is Oxygen-dependent coproporphyrinogen-III oxidase.